A 41-amino-acid polypeptide reads, in one-letter code: Large ribosomal subunit protein bL36 (41 aa).

Belongs to the bacterial ribosomal protein bL36 family.

The polypeptide is Large ribosomal subunit protein bL36 (Cereibacter sphaeroides (strain ATCC 17029 / ATH 2.4.9) (Rhodobacter sphaeroides)).